The chain runs to 112 residues: Integration host factor subunit alpha (112 aa).

It belongs to the bacterial histone-like protein family. In terms of assembly, heterodimer of an alpha and a beta chain.

This protein is one of the two subunits of integration host factor, a specific DNA-binding protein that functions in genetic recombination as well as in transcriptional and translational control. The chain is Integration host factor subunit alpha from Sinorhizobium fredii (strain NBRC 101917 / NGR234).